The chain runs to 283 residues: Nickel/cobalt efflux system RcnA (283 aa).

Topologically, residues 1 to 5 are periplasmic; sequence MGEFS. Residues 6-26 form a helical membrane-spanning segment; the sequence is ILLQQGNGWFFIPSAILLGIL. Topologically, residues 27-51 are cytoplasmic; it reads HGLEPGHSKTMMAAFIIAIKGTIKQ. A helical transmembrane segment spans residues 52–72; it reads AFMLGLAATLSHTAVVWLIAL. The Periplasmic portion of the chain corresponds to 73–85; sequence GGMYLSRAYAAES. The chain crosses the membrane as a helical span at residues 86–106; that stretch reads VEPWLQLISAIIILGTACWMF. Residues 107–183 are Cytoplasmic-facing; the sequence is WRTWRGEQQW…FHGQKVTNEQ (77 aa). Positions 120–148 are enriched in basic and acidic residues; that stretch reads SHHDHDHDHDHDHDHDHDHDHDHDHHGHT. The disordered stretch occupies residues 120 to 149; the sequence is SHHDHDHDHDHDHDHDHDHDHDHDHHGHTY. Residues 184-204 form a helical membrane-spanning segment; that stretch reads ILLFGLTGGLIPCPAAITLLL. At 205-218 the chain is on the periplasmic side; it reads ICIQLQALTLGATM. A helical transmembrane segment spans residues 219 to 239; it reads VLCFSLGLALTLVAVGVGAAI. The Cytoplasmic portion of the chain corresponds to 240–260; it reads SVQQAVKRWNGFTTLARRAPY. Residues 261-281 traverse the membrane as a helical segment; the sequence is FSSILIGLVGLYMGIHGYTGI. The Periplasmic segment spans residues 282–283; the sequence is MQ.

This sequence belongs to the NiCoT transporter (TC 2.A.52) family. RcnA subfamily.

The protein localises to the cell inner membrane. Its function is as follows. Efflux system for nickel and cobalt. The protein is Nickel/cobalt efflux system RcnA (rcnA) of Salmonella arizonae (strain ATCC BAA-731 / CDC346-86 / RSK2980).